Reading from the N-terminus, the 200-residue chain is Probable molybdenum cofactor guanylyltransferase (200 aa).

GTP is bound by residues 9-11 (LAG), K21, D69, and D100. D100 provides a ligand contact to Mg(2+).

This sequence belongs to the MobA family. Requires Mg(2+) as cofactor.

Its subcellular location is the cytoplasm. The enzyme catalyses Mo-molybdopterin + GTP + H(+) = Mo-molybdopterin guanine dinucleotide + diphosphate. In terms of biological role, transfers a GMP moiety from GTP to Mo-molybdopterin (Mo-MPT) cofactor (Moco or molybdenum cofactor) to form Mo-molybdopterin guanine dinucleotide (Mo-MGD) cofactor. This Bacillus cereus (strain ATCC 10987 / NRS 248) protein is Probable molybdenum cofactor guanylyltransferase.